We begin with the raw amino-acid sequence, 468 residues long: Ribulose bisphosphate carboxylase large chain (468 aa).

K5 carries the N6,N6,N6-trimethyllysine modification. 2 residues coordinate substrate: N114 and T164. The Proton acceptor role is filled by K166. A substrate-binding site is contributed by K168. Mg(2+) is bound by residues K192, D194, and E195. An N6-carboxylysine modification is found at K192. H285 functions as the Proton acceptor in the catalytic mechanism. Residues R286, H318, and S370 each contribute to the substrate site.

Belongs to the RuBisCO large chain family. Type I subfamily. Heterohexadecamer of 8 large chains and 8 small chains; disulfide-linked. The disulfide link is formed within the large subunit homodimers. The cofactor is Mg(2+). Post-translationally, the disulfide bond which can form in the large chain dimeric partners within the hexadecamer appears to be associated with oxidative stress and protein turnover.

The protein resides in the plastid. The protein localises to the chloroplast. It catalyses the reaction 2 (2R)-3-phosphoglycerate + 2 H(+) = D-ribulose 1,5-bisphosphate + CO2 + H2O. It carries out the reaction D-ribulose 1,5-bisphosphate + O2 = 2-phosphoglycolate + (2R)-3-phosphoglycerate + 2 H(+). Its function is as follows. RuBisCO catalyzes two reactions: the carboxylation of D-ribulose 1,5-bisphosphate, the primary event in carbon dioxide fixation, as well as the oxidative fragmentation of the pentose substrate in the photorespiration process. Both reactions occur simultaneously and in competition at the same active site. The protein is Ribulose bisphosphate carboxylase large chain of Tecoma stans (Yellow bells).